Reading from the N-terminus, the 478-residue chain is Alpha-1,3-mannosyl-glycoprotein 4-beta-N-acetylglucosaminyltransferase C (478 aa).

Residues 1-23 (MFKFHQMKHIFEILDKMRCLRKR) lie on the Cytoplasmic side of the membrane. Residues 24–44 (STVSFLGVLVIFLLFMNLYIE) form a helical; Signal-anchor for type II membrane protein membrane-spanning segment. Residues 45 to 478 (DSYVLEGDKQ…IIRSISIWTS (434 aa)) lie on the Lumenal side of the membrane. Asn-84 and Asn-215 each carry an N-linked (GlcNAc...) asparagine glycan.

It belongs to the glycosyltransferase 54 family. Requires a divalent metal cation as cofactor.

The protein localises to the golgi apparatus membrane. The enzyme catalyses N(4)-{beta-D-GlcNAc-(1-&gt;2)-alpha-D-Man-(1-&gt;3)-[beta-D-GlcNAc-(1-&gt;2)-alpha-D-Man-(1-&gt;6)]-beta-D-Man-(1-&gt;4)-beta-D-GlcNAc-(1-&gt;4)-beta-D-GlcNAc}-L-asparaginyl-[protein] + UDP-N-acetyl-alpha-D-glucosamine = N(4)-{beta-D-GlcNAc-(1-&gt;2)-[beta-D-GlcNAc-(1-&gt;4)]-alpha-D-Man-(1-&gt;3)-[beta-D-GlcNAc-(1-&gt;2)-alpha-D-Man-(1-&gt;6)]-beta-D-Man-(1-&gt;4)-beta-D-GlcNAc-(1-&gt;4)-beta-D-GlcNAc}-L-asparaginyl-[protein] + UDP + H(+). It participates in protein modification; protein glycosylation. Functionally, glycosyltransferase that participates in the transfer of N-acetylglucosamine (GlcNAc) to the core mannose residues of N-linked glycans. Catalyzes the formation of the GlcNAcbeta1-4 branch on the GlcNAcbeta1-2Manalpha1-3 arm of the core structure of N-linked glycans. Essential for the production of tri- and tetra-antennary N-linked sugar chains. Does not catalyze the transfer of GlcNAc to the Manalpha1-6 arm to form GlcNAcBeta1-4Manalpha1-6 linkage ('GnT-VI' activity). The sequence is that of Alpha-1,3-mannosyl-glycoprotein 4-beta-N-acetylglucosaminyltransferase C (MGAT4C) from Macaca fascicularis (Crab-eating macaque).